The chain runs to 299 residues: Protein sprouty homolog 4 (299 aa).

M1 is subject to N-acetylmethionine. Disordered stretches follow at residues 50–79 (NDYI…PTPA) and 92–127 (FSGR…ASPR). The span at 92–107 (FSGRPSSVSSSSSTSS) shows a compositional bias: low complexity. The residue at position 125 (S125) is a Phosphoserine. Residues 166–273 (KCKECASPRT…GYDRLRRPGC (108 aa)) enclose the SPR domain.

The protein belongs to the sprouty family. Interacts (via C-terminus) with TESK1 (via both C- and N-termini); the interaction inhibits TESK1 kinase activity. Interacts with RAF1. Interacts with CAV1 (via C-terminus).

It localises to the cytoplasm. It is found in the cell projection. The protein resides in the ruffle membrane. In terms of biological role, suppresses the insulin receptor and EGFR-transduced MAPK signaling pathway, but does not inhibit MAPK activation by a constitutively active mutant Ras. Probably impairs the formation of GTP-Ras. Inhibits Ras-independent, but not Ras-dependent, activation of RAF1. Represses integrin-mediated cell spreading via inhibition of TESK1-mediated phosphorylation of cofilin. This Bos taurus (Bovine) protein is Protein sprouty homolog 4 (SPRY4).